The sequence spans 549 residues: Chaperonin GroEL (549 aa).

Residues 30 to 33 (TLGP), Lys-51, 87 to 91 (DGTTT), Gly-415, and Asp-497 contribute to the ATP site.

Belongs to the chaperonin (HSP60) family. Forms a cylinder of 14 subunits composed of two heptameric rings stacked back-to-back. Interacts with the co-chaperonin GroES.

Its subcellular location is the cytoplasm. It catalyses the reaction ATP + H2O + a folded polypeptide = ADP + phosphate + an unfolded polypeptide.. In terms of biological role, together with its co-chaperonin GroES, plays an essential role in assisting protein folding. The GroEL-GroES system forms a nano-cage that allows encapsulation of the non-native substrate proteins and provides a physical environment optimized to promote and accelerate protein folding. The sequence is that of Chaperonin GroEL from Pectobacterium atrosepticum (strain SCRI 1043 / ATCC BAA-672) (Erwinia carotovora subsp. atroseptica).